A 101-amino-acid polypeptide reads, in one-letter code: Ascorbate-specific PTS system EIIB component (101 aa).

The region spanning 1–100 (MTVRILAVCG…VIKEHFPQDV (100 aa)) is the PTS EIIB type-2 domain. Cys-9 acts as the Phosphocysteine intermediate in catalysis. Cys-9 carries the phosphocysteine modification.

It localises to the cytoplasm. The catalysed reaction is N(pros)-phospho-L-histidyl-[protein] + L-ascorbate(out) = L-ascorbate 6-phosphate(in) + L-histidyl-[protein]. Functionally, the phosphoenolpyruvate-dependent sugar phosphotransferase system (sugar PTS), a major carbohydrate active transport system, catalyzes the phosphorylation of incoming sugar substrates concomitantly with their translocation across the cell membrane. The enzyme II UlaABC PTS system is involved in ascorbate transport. This is Ascorbate-specific PTS system EIIB component (ulaB) from Escherichia coli O157:H7.